Reading from the N-terminus, the 237-residue chain is tRNA (guanine-N(7)-)-methyltransferase (237 aa).

S-adenosyl-L-methionine is bound by residues Asp35, Glu60, Asn87, and Asp113. Asp113 is an active-site residue. Substrate-binding residues include Lys117 and Asp149.

This sequence belongs to the class I-like SAM-binding methyltransferase superfamily. TrmB family.

The enzyme catalyses guanosine(46) in tRNA + S-adenosyl-L-methionine = N(7)-methylguanosine(46) in tRNA + S-adenosyl-L-homocysteine. Its pathway is tRNA modification; N(7)-methylguanine-tRNA biosynthesis. In terms of biological role, catalyzes the formation of N(7)-methylguanine at position 46 (m7G46) in tRNA. This is tRNA (guanine-N(7)-)-methyltransferase from Synechococcus sp. (strain WH7803).